A 242-amino-acid chain; its full sequence is Small ribosomal subunit protein uS2 (242 aa).

It belongs to the universal ribosomal protein uS2 family.

The protein is Small ribosomal subunit protein uS2 of Shouchella clausii (strain KSM-K16) (Alkalihalobacillus clausii).